We begin with the raw amino-acid sequence, 219 residues long: Adenylate kinase (219 aa).

ATP is bound at residue 10-15; the sequence is GAGKGT. Residues 30-59 are NMP; the sequence is STGDMLRAAVKAGTPLGQQAKKIMDEGGLV. AMP contacts are provided by residues threonine 31, arginine 36, 57–59, 85–88, and glutamine 92; these read GLV and GFPR. The LID stretch occupies residues 122-159; the sequence is GRRVHPGSGRVYHVTHNPPRQEGKDDVTGEDLVQREDD. Residues arginine 123 and 132 to 133 each bind ATP; that span reads VY. The disordered stretch occupies residues 128-150; it reads GSGRVYHVTHNPPRQEGKDDVTG. Residues 140 to 150 are compositionally biased toward basic and acidic residues; the sequence is PRQEGKDDVTG. Arginine 156 and arginine 167 together coordinate AMP. Arginine 203 serves as a coordination point for ATP.

Belongs to the adenylate kinase family. Monomer.

It localises to the cytoplasm. The catalysed reaction is AMP + ATP = 2 ADP. Its pathway is purine metabolism; AMP biosynthesis via salvage pathway; AMP from ADP: step 1/1. Functionally, catalyzes the reversible transfer of the terminal phosphate group between ATP and AMP. Plays an important role in cellular energy homeostasis and in adenine nucleotide metabolism. The polypeptide is Adenylate kinase (Halorhodospira halophila (strain DSM 244 / SL1) (Ectothiorhodospira halophila (strain DSM 244 / SL1))).